The chain runs to 142 residues: Hemoglobin subunit alpha-5 (142 aa).

A Globin domain is found at 2–142; sequence TFSSAEKAAI…VSAVLVSKYR (141 aa). Histidine 59 provides a ligand contact to O2. Histidine 88 lines the heme b pocket.

Belongs to the globin family. As to quaternary structure, heterotetramer of two alpha chains and two beta chains. In terms of tissue distribution, red blood cells.

This is a larval (tadpole) alpha-globin. This chain is Hemoglobin subunit alpha-5 (hba5), found in Xenopus laevis (African clawed frog).